Here is a 275-residue protein sequence, read N- to C-terminus: N-(5'-phosphoribosyl)anthranilate isomerase 1, chloroplastic (275 aa).

The N-terminal 32 residues, 1-32, are a transit peptide targeting the chloroplast; sequence MSTGISTDLHVHFGALNFSKTYKSGLSNRTVS.

It belongs to the TrpF family. As to expression, expressed in roots and shoots.

The protein localises to the plastid. Its subcellular location is the chloroplast. The enzyme catalyses N-(5-phospho-beta-D-ribosyl)anthranilate = 1-(2-carboxyphenylamino)-1-deoxy-D-ribulose 5-phosphate. Its pathway is amino-acid biosynthesis; L-tryptophan biosynthesis; L-tryptophan from chorismate: step 3/5. Functionally, catalyzes the conversion of 5-phosphoribosylanthranilate to l-(O-carboxyphenylamino)-l-deoxyribulose-5-phosphate, which is the third step of the tryptophan biosynthetic pathway. In Arabidopsis thaliana (Mouse-ear cress), this protein is N-(5'-phosphoribosyl)anthranilate isomerase 1, chloroplastic (PAI1).